Reading from the N-terminus, the 353-residue chain is UPF0283 membrane protein YcjF (353 aa).

Residues 1–19 (MSEPLKPRIDFAEPLKEEP) are compositionally biased toward basic and acidic residues. Residues 1-35 (MSEPLKPRIDFAEPLKEEPTSAFKAQQTFSEAESR) form a disordered region. Transmembrane regions (helical) follow at residues 70-90 (MVMG…VQWT), 100-120 (VALG…GSVV), and 213-233 (ESTL…FIAW).

The protein belongs to the UPF0283 family.

The protein resides in the cell inner membrane. This is UPF0283 membrane protein YcjF from Salmonella paratyphi A (strain AKU_12601).